The chain runs to 373 residues: 4-hydroxy-3-methylbut-2-en-1-yl diphosphate synthase (flavodoxin) (373 aa).

Cys-270, Cys-273, Cys-305, and Glu-312 together coordinate [4Fe-4S] cluster.

This sequence belongs to the IspG family. It depends on [4Fe-4S] cluster as a cofactor.

The enzyme catalyses (2E)-4-hydroxy-3-methylbut-2-enyl diphosphate + oxidized [flavodoxin] + H2O + 2 H(+) = 2-C-methyl-D-erythritol 2,4-cyclic diphosphate + reduced [flavodoxin]. It participates in isoprenoid biosynthesis; isopentenyl diphosphate biosynthesis via DXP pathway; isopentenyl diphosphate from 1-deoxy-D-xylulose 5-phosphate: step 5/6. Its function is as follows. Converts 2C-methyl-D-erythritol 2,4-cyclodiphosphate (ME-2,4cPP) into 1-hydroxy-2-methyl-2-(E)-butenyl 4-diphosphate. The protein is 4-hydroxy-3-methylbut-2-en-1-yl diphosphate synthase (flavodoxin) of Photobacterium profundum (strain SS9).